Consider the following 579-residue polypeptide: MFS-type transporter olcL (579 aa).

Residues 1-24 (MANIGGSNAVSSAQGSQISDSPTT) are compositionally biased toward polar residues. Residues 1–75 (MANIGGSNAV…GFGEDGCQSD (75 aa)) form a disordered region. The span at 25-35 (VDDRLDEHKET) shows a compositional bias: basic and acidic residues. Over residues 36–54 (STQSIDHSENITQSPTSLQ) the composition is skewed to polar residues. A glycan (N-linked (GlcNAc...) asparagine) is linked at Asn-45. Transmembrane regions (helical) follow at residues 85–105 (LAAI…DNTI), 121–141 (GDVG…TLVF), 159–179 (AVFE…GLII), 183–203 (IAGL…SQSV), 214–234 (LVGG…GAFT), 241–261 (WCFY…LLFF), 282–302 (LIGL…LQWG), 310–330 (SGRI…FIMV), and 355–375 (LFNF…PVWF). The N-linked (GlcNAc...) asparagine glycan is linked to Asn-380. Transmembrane regions (helical) follow at residues 388–408 (LMNL…GYGV), 411–431 (IGYY…GAGL), 439–459 (FGPS…GLGL), 479–501 (IAIV…QNVF), and 553–573 (FYVG…IQWI).

It belongs to the major facilitator superfamily. TCR/Tet family.

The protein localises to the peroxisome membrane. Functionally, MFS-type transporter; part of the gene cluster that mediates the biosynthesis of 15-deoxyoxalicine B. The first step of the pathway is the synthesis of nicotinyl-CoA from nicotinic acid by the nicotinic acid-CoA ligase olcI. Nicotinyl-CoA is then a substrate of polyketide synthase olcA to produce 4-hydroxy-6-(3-pyridinyl)-2H-pyran-2-one (HPPO) which is further prenylated by the polyprenyl transferase olcH to yield geranylgeranyl-HPPO. Geranylgeranyl pyrophosphate is provided by the cluster-specific geranylgeranyl pyrophosphate synthase olcC. The FAD-dependent monooxygenase olcE catalyzes the epoxidation of geranylgeranyl-HPPO and the terpene cyclase olcD catalyzes the cyclization of the terpenoid component, resulting in the formation of the tricyclic terpene moiety seen in predecaturin E. The cytochrome P450 monooxygenase then catalyzes the allylic oxidation of predecaturin E, which is followed by spirocylization with concomitant loss of one molecule of water to form decaturin E. Decaturin E is the substrate of the cytochrome P450 monooxygenase olcJ which hydroxylates it at the C-29 position to form decaturin F. The short-chain dehydrogenase/reductase olcF may catalyze the oxidation of decaturin F to generate the 29-hydroxyl-27-one intermediate, and subsequent hemiacetal formation probably leads to the formation of decaturin C. The dioxygenase olcK may be a peroxisomal enzyme that catalyzes the hydroxylation of decaturin C into decaturin A once decaturin C is shuttled into the peroxisome by the MFS transporter olcL. Finally the cytochrome P450 monooxygenase olcB catalyzes the oxidative rearrangement to yield 15-deoxyoxalicine B. In the absence of olcJ, decaturin E may be shunted to a pathway in which it is oxidized to a ketone, possibly by olcF, to form decaturin D, which undergoes further allylic oxidation to yield decaturin G. Moreover, in the absence of oclK or oclL, oclB can convert decaturin C into 15-deoxyoxalicine A. This is MFS-type transporter olcL from Penicillium canescens.